A 396-amino-acid chain; its full sequence is Elongation factor Tu (396 aa).

Residues 10–206 (KPHCNIGTIG…AVDAYIPQPE (197 aa)) form the tr-type G domain. A G1 region spans residues 19–26 (GHVDHGKT). Position 19–26 (19–26 (GHVDHGKT)) interacts with GTP. Mg(2+) is bound at residue threonine 26. A G2 region spans residues 60-64 (GITIS). The interval 81–84 (DCPG) is G3. Residues 81–85 (DCPGH) and 136–139 (NKVD) contribute to the GTP site. Residues 136–139 (NKVD) are G4. Positions 174–176 (SAL) are G5.

It belongs to the TRAFAC class translation factor GTPase superfamily. Classic translation factor GTPase family. EF-Tu/EF-1A subfamily. In terms of assembly, monomer.

It is found in the cytoplasm. The catalysed reaction is GTP + H2O = GDP + phosphate + H(+). Its function is as follows. GTP hydrolase that promotes the GTP-dependent binding of aminoacyl-tRNA to the A-site of ribosomes during protein biosynthesis. This chain is Elongation factor Tu, found in Granulibacter bethesdensis (strain ATCC BAA-1260 / CGDNIH1).